The primary structure comprises 152 residues: Cytochrome c-type biogenesis protein CcmE (152 aa).

Residues 1 to 9 (MRGLKKQRR) are Cytoplasmic-facing. A helical; Signal-anchor for type II membrane protein membrane pass occupies residues 10–30 (IQILIVAAVALTLSSVLIGYA). At 31 to 152 (LRDGINFFRP…PDGYARDGDS (122 aa)) the chain is on the periplasmic side. The heme site is built by H123 and Y127.

Belongs to the CcmE/CycJ family.

It localises to the cell inner membrane. Functionally, heme chaperone required for the biogenesis of c-type cytochromes. Transiently binds heme delivered by CcmC and transfers the heme to apo-cytochromes in a process facilitated by CcmF and CcmH. This is Cytochrome c-type biogenesis protein CcmE from Jannaschia sp. (strain CCS1).